Reading from the N-terminus, the 252-residue chain is MSSSGLQLHIAGKRFGTRQVLRDIDLQLAPGEIVSLIGASGCGKSTLLRILAGLERDYAGEVALDGARVRGVDRQIGFIFQEPRLLPWLDVAANVAFADEADLSPAAARQSARVQQLLAQVGLLDYATALPKQLSGGQAQRVALARGLYRQPRVLLLDEPFSAVDAFTRIKLQDLLLRLAGEHGFSVLLVTHDIDEAVYLSDRVIVIGGQPGTIAHAQRLELPRPRDRQAHEAALRQARQDLLAALHSLHVF.

Residues 6 to 234 (LQLHIAGKRF…PRDRQAHEAA (229 aa)) form the ABC transporter domain. An ATP-binding site is contributed by 38–45 (GASGCGKS).

Belongs to the ABC transporter superfamily. Aliphatic sulfonates importer (TC 3.A.1.17.2) family. As to quaternary structure, the complex is composed of two ATP-binding proteins (SsuB), two transmembrane proteins (SsuC) and a solute-binding protein (SsuA).

It localises to the cell inner membrane. It carries out the reaction ATP + H2O + aliphatic sulfonate-[sulfonate-binding protein]Side 1 = ADP + phosphate + aliphatic sulfonateSide 2 + [sulfonate-binding protein]Side 1.. Its function is as follows. Part of the ABC transporter complex SsuABC involved in aliphatic sulfonates import. Responsible for energy coupling to the transport system. In Xanthomonas axonopodis pv. citri (strain 306), this protein is Aliphatic sulfonates import ATP-binding protein SsuB 1.